The primary structure comprises 865 residues: Protein translocase subunit SecA (865 aa).

ATP-binding positions include Gln93, 111 to 115, and Asp501; that span reads GEGKT. Residues Cys841, Cys843, Cys852, and Cys853 each contribute to the Zn(2+) site.

This sequence belongs to the SecA family. As to quaternary structure, monomer and homodimer. Part of the essential Sec protein translocation apparatus which comprises SecA, SecYEG and auxiliary proteins SecDF-YajC and YidC. The cofactor is Zn(2+).

The protein localises to the cell inner membrane. Its subcellular location is the cytoplasm. It catalyses the reaction ATP + H2O + cellular proteinSide 1 = ADP + phosphate + cellular proteinSide 2.. Its function is as follows. Part of the Sec protein translocase complex. Interacts with the SecYEG preprotein conducting channel. Has a central role in coupling the hydrolysis of ATP to the transfer of proteins into and across the cell membrane, serving as an ATP-driven molecular motor driving the stepwise translocation of polypeptide chains across the membrane. The polypeptide is Protein translocase subunit SecA (Helicobacter pylori (strain HPAG1)).